Consider the following 289-residue polypeptide: Thioredoxin-like protein 1 (289 aa).

The Thioredoxin domain occupies valine 2–asparagine 109. Cysteines 34 and 37 form a disulfide. Serine 113 carries the phosphoserine modification. The 171-residue stretch at glutamate 115–lysine 285 folds into the PITH domain.

As to quaternary structure, component of the 19S regulatory cap of the 26S proteasome. Interacts with PSMD14/RPN11. Interacts with, and reduces EEF1A1.

The protein localises to the cytoplasm. Its subcellular location is the nucleus. Functionally, active thioredoxin with a redox potential of about -250 mV. This is Thioredoxin-like protein 1 (Txnl1) from Mus musculus (Mouse).